A 623-amino-acid chain; its full sequence is Aspartate--tRNA(Asp/Asn) ligase (623 aa).

Glu-175 lines the L-aspartate pocket. The tract at residues 199 to 202 (QQYK) is aspartate. Arg-221 and His-483 together coordinate L-aspartate. 221–223 (RDE) contacts ATP. Residue Glu-517 participates in ATP binding. Arg-524 serves as a coordination point for L-aspartate. Residue 569–572 (GVDR) participates in ATP binding.

It belongs to the class-II aminoacyl-tRNA synthetase family. Type 1 subfamily. In terms of assembly, homodimer.

Its subcellular location is the cytoplasm. It carries out the reaction tRNA(Asx) + L-aspartate + ATP = L-aspartyl-tRNA(Asx) + AMP + diphosphate. In terms of biological role, aspartyl-tRNA synthetase with relaxed tRNA specificity since it is able to aspartylate not only its cognate tRNA(Asp) but also tRNA(Asn). Reaction proceeds in two steps: L-aspartate is first activated by ATP to form Asp-AMP and then transferred to the acceptor end of tRNA(Asp/Asn). In Xanthobacter autotrophicus (strain ATCC BAA-1158 / Py2), this protein is Aspartate--tRNA(Asp/Asn) ligase.